The sequence spans 323 residues: Thioredoxin reductase (323 aa).

42-49 contributes to the FAD binding site; the sequence is YRAEADGA. C143 and C146 are oxidised to a cystine. 286–295 contacts FAD; sequence DVLCNEVKQA.

This sequence belongs to the class-II pyridine nucleotide-disulfide oxidoreductase family. Homodimer. Requires FAD as cofactor.

It localises to the cytoplasm. The enzyme catalyses [thioredoxin]-dithiol + NADP(+) = [thioredoxin]-disulfide + NADPH + H(+). This Aquifex aeolicus (strain VF5) protein is Thioredoxin reductase (trxB).